A 310-amino-acid chain; its full sequence is Malate dehydrogenase (310 aa).

NAD(+) contacts are provided by residues 7–13 (GAAGGIG) and D34. Substrate is bound by residues R81 and R87. NAD(+) is bound by residues N94 and 117-119 (ITN). N119 and R153 together coordinate substrate. The Proton acceptor role is filled by H177. M227 lines the NAD(+) pocket.

This sequence belongs to the LDH/MDH superfamily. MDH type 1 family. In terms of assembly, homodimer.

It catalyses the reaction (S)-malate + NAD(+) = oxaloacetate + NADH + H(+). Catalyzes the reversible oxidation of malate to oxaloacetate. This is Malate dehydrogenase from Pseudoalteromonas translucida (strain TAC 125).